Reading from the N-terminus, the 473-residue chain is Sphingosine kinase 1 (473 aa).

A DAGKc domain is found at 83–233 (QCRGNLLVFI…VALYSVKTDN (151 aa)). ATP-binding positions include 93–95 (NPN) and 125–129 (TTGPN). Residue 151-154 (SGDG) participates in substrate binding. The active-site Proton donor/acceptor is aspartate 153. ATP-binding positions include glutamate 158 and 184 to 186 (GSG). Substrate is bound at residue aspartate 251. Residues arginine 258, arginine 265, and 448 to 450 (DGE) contribute to the ATP site.

Mg(2+) serves as cofactor. As to expression, expressed in the majority of cholinergic and GABAergic neurons, body wall muscle, excretory canal cells, intestine, and hypodermis.

Its subcellular location is the presynaptic cell membrane. The protein resides in the cell projection. It is found in the axon. The protein localises to the perikaryon. It localises to the mitochondrion membrane. The catalysed reaction is a sphingoid base + ATP = a sphingoid 1-phosphate + ADP + H(+). The enzyme catalyses 15-methylhexadecasphing-4-enine + ATP = 15-methylhexadecasphing-4-enine 1-phosphate + ADP + H(+). It catalyses the reaction 15-methylhexadecasphinganine + ATP = 15-methylhexadecasphinganine 1-phosphate + ADP + H(+). Its pathway is lipid metabolism; sphingolipid metabolism. Catalyzes the phosphorylation of sphingoid bases to form sphingoid 1-phosphate (SPP), which have both intra- and extracellular functions. C.elegans contain specific sphingoid bases, which are unique or different in structure compared to the sphingoid bases found in other animals. Two examples of these distinctive compounds are: 15-methylhexadecasphinganine and 15-methylhexadecasphing-4-enine. Required for neurotransmitter release from neuromuscular junctions. Acts by recruiting the synaptic vesicle priming protein unc-13 to synapses. The sequence is that of Sphingosine kinase 1 (sphk-1) from Caenorhabditis elegans.